A 28-amino-acid polypeptide reads, in one-letter code: uncharacterized protein (28 aa).

A helical transmembrane segment spans residues 5-27 (SAFHACNIIFLPLVKCASATIML).

Its subcellular location is the membrane. This is an uncharacterized protein from Saccharomyces cerevisiae (strain ATCC 204508 / S288c) (Baker's yeast).